Here is a 514-residue protein sequence, read N- to C-terminus: Maturase K (514 aa).

It belongs to the intron maturase 2 family. MatK subfamily.

It is found in the plastid. Its subcellular location is the chloroplast. In terms of biological role, usually encoded in the trnK tRNA gene intron. Probably assists in splicing its own and other chloroplast group II introns. The sequence is that of Maturase K from Drosophyllum lusitanicum (Portuguese sundew).